A 56-amino-acid chain; its full sequence is uncharacterized protein (56 aa).

Helical transmembrane passes span 6–26 (VILLAVMICLVSAITVFLLNG) and 29–49 (VDFLDIGGTIIGCFLGIFVVV).

It is found in the cell membrane. This is an uncharacterized protein from Bacillus subtilis (strain 168).